Here is a 102-residue protein sequence, read N- to C-terminus: Trans-acting regulatory protein HvrA (102 aa).

A DNA-binding region spans residues 80-85 (RGRKPK).

The protein belongs to the histone-like protein H-NS family. As to quaternary structure, homodimer that oligomerizes on DNA into higher-order complexes that form bridges between disparate regions of DNA compacting it.

The protein localises to the cytoplasm. It is found in the nucleoid. Functionally, a dim-light trans-acting activator of Puf and Puh expression, that has no effect on the expression of the Puc operon. Responsible for regulating light-harvesting-I and reaction center structural gene expression differentially from that of light-harvesting-II expression in response to alterations in light. Proper light regulation of light-harvesting and reaction center polypeptide synthesis is an important physiological trait that enables cells to adapt to ever-changing environmental conditions of light intensity. The polypeptide is Trans-acting regulatory protein HvrA (hvrA) (Rhodobacter capsulatus (Rhodopseudomonas capsulata)).